A 101-amino-acid chain; its full sequence is Large ribosomal subunit protein uL24 (101 aa).

Belongs to the universal ribosomal protein uL24 family. As to quaternary structure, part of the 50S ribosomal subunit.

In terms of biological role, one of two assembly initiator proteins, it binds directly to the 5'-end of the 23S rRNA, where it nucleates assembly of the 50S subunit. Functionally, one of the proteins that surrounds the polypeptide exit tunnel on the outside of the subunit. The polypeptide is Large ribosomal subunit protein uL24 (Borrelia turicatae (strain 91E135)).